The chain runs to 158 residues: Superoxide dismutase [Cu-Zn] (158 aa).

Residues H46, H48, and H63 each coordinate Cu cation. C57 and C149 are oxidised to a cystine. Zn(2+) is bound by residues H63, H71, H80, and D83. H120 lines the Cu cation pocket.

Belongs to the Cu-Zn superoxide dismutase family. In terms of assembly, homodimer. It depends on Cu cation as a cofactor. The cofactor is Zn(2+).

The protein resides in the cytoplasm. The enzyme catalyses 2 superoxide + 2 H(+) = H2O2 + O2. In terms of biological role, destroys radicals which are normally produced within the cells and which are toxic to biological systems. This is Superoxide dismutase [Cu-Zn] (sod-1) from Onchocerca volvulus.